We begin with the raw amino-acid sequence, 653 residues long: MKFSVLKLDVGKREVEAQEIEREDIFGVVDYGIMRHNELRTYEVDPYDPRNIVIFGIGPFAGSVLPGSHRLVFFFRSPLYGGLFPSTMGGAGYQFKNVGVDFVEIHGKAEKPTVIILKNDGEKLSVDFYEIELEKLLDVWKEYKGEEGVYALTQYLLDNLASVFEGMEFRIAVVGPAALNTNMGAIFSQALRNGKRAVGSEDWAARGGPGSVLLRAHNVVAIAFGGKKRKREFPGEDISDVKVAKRVVEGIHKKAQRDVINESTVKYRYNPKLNTGGTFGGNYPAEGDLVPVLNWQMPYIPKEERIKIHELIMKYYWEPFNKESIQPKNWTTCGEPCPVVCKKHRKGHHVEYEPYEANGPLSGSIYLYASDISVHAVDAMGFDAIEFGGTAAWVLELVHKGLLKPAEVGISDVPEFTKDDLITKPVEASEKNAKLVAELAHSIAFGKTEVARIIGMGKRKASKILDEKFKDRLSYGESFKDYGVYTPLGDDGEINPTMYWAIGNFIPLPIQGRYWTFYQFGVFLEPEELAQKIVSSALWEFWYDNVGWCRFHRGWMKKVLKALFMEAYGVSIDMEEHAKKQIRKLIDYLKKAGYEPVFWDSMRVIDLVAKGSEEFGNENWAKKFKEDKIGTAKEYLKRVLDAYSQLIGTEWTL.

Residues R70, G89, R196, A197, G199, and R206 each contribute to the tungstopterin site. [4Fe-4S] cluster contacts are provided by C333 and C337. Tungstopterin-binding residues include D378, D383, and D544. C549 is a binding site for [4Fe-4S] cluster.

The protein belongs to the AOR/FOR family. In terms of assembly, monomer. [4Fe-4S] cluster serves as cofactor. Requires tungstopterin as cofactor.

It carries out the reaction D-glyceraldehyde 3-phosphate + 2 oxidized [2Fe-2S]-[ferredoxin] + H2O = (2R)-3-phosphoglycerate + 2 reduced [2Fe-2S]-[ferredoxin] + 3 H(+). Sensitive to oxygen. Activity increased by 58%-93% in the presence of acetyl phosphate, 3-phosphoglycerate or 2,3-bisphosphoglycerate at 10 mM concentration. Inhibited by up to 25% in the presence of crotonaldehyde or formaldehyde at 10 mM concentration. Inhibited by up to 50% by sodium dithionate. 3.5-fold increase in activity observed by addition of potassium phosphate or sodium arsenate at 200 mM concentration. Activity enhanced by potassium chloride, sodium citrate or sodium sulfate at 200 mM concentration. Functionally, catalyzes the oxidation of glyceraldehyde-3-phosphate to 3-phosphoglycerate. Uses ferredoxin as electron acceptor. In vitro can also use benzyl viologen, but not NADP or NAD, as electron acceptor. Probably acts as a glycolytic enzyme in place of glyceraldehyde-3-phosphate dehydrogenase (GAPDH) and phosphoglycerate kinase (PGK) in an unusual Emden-Meyerhof glycolysis. In Pyrococcus furiosus (strain ATCC 43587 / DSM 3638 / JCM 8422 / Vc1), this protein is Glyceraldehyde-3-phosphate:ferredoxin oxidoreductase.